The primary structure comprises 417 residues: DnaJ protein homolog ANJ1 (417 aa).

In terms of domain architecture, J spans 11-76 (STRYYEILGV…REIYDQYGED (66 aa)). Residues 135-219 (GTTKKLSLSR…CKGEKVVQEK (85 aa)) form a CR-type zinc finger. CXXCXGXG motif repeat units lie at residues 148 to 155 (CSKCTGKG), 164 to 171 (CSGCQGTG), and 191 to 198 (CNECKGTG). A CXXCXGXG motif; approximate repeat occupies 207 to 214 (CPQCKGEK). The interval 384-417 (IEEEMKRKQTQAQQEAYDEDDEPAGGQRVQCAQQ) is disordered. Position 414 is a cysteine methyl ester (Cys-414). The S-farnesyl cysteine moiety is linked to residue Cys-414. Residues 415–417 (AQQ) constitute a propeptide, removed in mature form.

Its subcellular location is the membrane. Plays a continuous role in plant development probably in the structural organization of compartments. The protein is DnaJ protein homolog ANJ1 of Atriplex nummularia (Old man saltbush).